Reading from the N-terminus, the 20-residue chain is Putative beta-neurotoxin (20 aa).

The LCN-type CS-alpha/beta domain maps to 1–20 (KDGYLVGSDGCKYSCLTRPG).

In terms of tissue distribution, expressed by the venom gland.

The protein resides in the secreted. Beta toxins bind voltage-independently at site-4 of sodium channels (Nav) and shift the voltage of activation toward more negative potentials thereby affecting sodium channel activation and promoting spontaneous and repetitive firing. This is Putative beta-neurotoxin from Tityus pachyurus (Colombian scorpion).